The following is a 371-amino-acid chain: 4-hydroxy-3-methylbut-2-en-1-yl diphosphate synthase (flavodoxin) (371 aa).

[4Fe-4S] cluster-binding residues include C270, C273, C305, and E312.

Belongs to the IspG family. [4Fe-4S] cluster is required as a cofactor.

The enzyme catalyses (2E)-4-hydroxy-3-methylbut-2-enyl diphosphate + oxidized [flavodoxin] + H2O + 2 H(+) = 2-C-methyl-D-erythritol 2,4-cyclic diphosphate + reduced [flavodoxin]. It participates in isoprenoid biosynthesis; isopentenyl diphosphate biosynthesis via DXP pathway; isopentenyl diphosphate from 1-deoxy-D-xylulose 5-phosphate: step 5/6. Its function is as follows. Converts 2C-methyl-D-erythritol 2,4-cyclodiphosphate (ME-2,4cPP) into 1-hydroxy-2-methyl-2-(E)-butenyl 4-diphosphate. The protein is 4-hydroxy-3-methylbut-2-en-1-yl diphosphate synthase (flavodoxin) of Shewanella frigidimarina (strain NCIMB 400).